The primary structure comprises 598 residues: Elongation factor 4 (598 aa).

In terms of domain architecture, tr-type G spans 4–186 (SHIRNFSIIA…VIVNKIPPPE (183 aa)). Residues 16–21 (DHGKST) and 133–136 (NKID) each bind GTP.

It belongs to the TRAFAC class translation factor GTPase superfamily. Classic translation factor GTPase family. LepA subfamily.

The protein localises to the cell inner membrane. It carries out the reaction GTP + H2O = GDP + phosphate + H(+). In terms of biological role, required for accurate and efficient protein synthesis under certain stress conditions. May act as a fidelity factor of the translation reaction, by catalyzing a one-codon backward translocation of tRNAs on improperly translocated ribosomes. Back-translocation proceeds from a post-translocation (POST) complex to a pre-translocation (PRE) complex, thus giving elongation factor G a second chance to translocate the tRNAs correctly. Binds to ribosomes in a GTP-dependent manner. This chain is Elongation factor 4, found in Alteromonas mediterranea (strain DSM 17117 / CIP 110805 / LMG 28347 / Deep ecotype).